A 142-amino-acid polypeptide reads, in one-letter code: Galactose-6-phosphate isomerase subunit LacA (142 aa).

The protein belongs to the LacAB/RpiB family. Heteromultimeric protein consisting of LacA and LacB.

The enzyme catalyses aldehydo-D-galactose 6-phosphate = keto-D-tagatose 6-phosphate. Its pathway is carbohydrate metabolism; D-galactose 6-phosphate degradation; D-tagatose 6-phosphate from D-galactose 6-phosphate: step 1/1. This is Galactose-6-phosphate isomerase subunit LacA from Streptococcus mutans serotype c (strain ATCC 700610 / UA159).